A 294-amino-acid polypeptide reads, in one-letter code: MKTKIIVIVGPTAVGKTALAIEVAKRFNGEVVSGDSQQVYRGLDIGTAKASPEEQAAVPHHLIDVREITESYSAFDFVSEAKMTIEDIHSRGKLAIIAGGTGLYIQSLLEGYHLGGETPHEEILAYRASLEPYSDXELAHLVEQAGLEIPQFNRRRAMRALEIAHFGQDLENQEILYEPLIICLDDERSQLYERINHRVDLMFEAGLLDEAKWLFDHSPNVQAAKGIGYKELFPYFRGEQTFEEARESLKQATRRFAKRQLTWFRNRMQVTFYQIGESGVQDRILSQIEEFLDD.

An ATP-binding site is contributed by 10 to 17 (GPTAVGKT). Substrate is bound at residue 12 to 17 (TAVGKT). An interaction with substrate tRNA region spans residues 35–38 (DSQQ).

It belongs to the IPP transferase family. In terms of assembly, monomer. It depends on Mg(2+) as a cofactor.

It carries out the reaction adenosine(37) in tRNA + dimethylallyl diphosphate = N(6)-dimethylallyladenosine(37) in tRNA + diphosphate. Functionally, catalyzes the transfer of a dimethylallyl group onto the adenine at position 37 in tRNAs that read codons beginning with uridine, leading to the formation of N6-(dimethylallyl)adenosine (i(6)A). This is tRNA dimethylallyltransferase from Streptococcus pneumoniae serotype 19F (strain G54).